The primary structure comprises 730 residues: Jacalin-related lectin 5 (730 aa).

The 126-residue stretch at 1 to 126 (MSWDDGKHTK…LNSIDAHFAP (126 aa)) folds into the Jacalin-type lectin 1 domain. The tract at residues 121-450 (DAHFAPAPPP…GNQWDDGTDH (330 aa)) is disordered. Composition is skewed to low complexity over residues 138–153 (GASG…GSAG), 168–179 (AGGSKPSSGSAG), 196–207 (AGGSKPSSGSAG), and 248–261 (TEKN…SSGS). Residues 275 to 307 (ETVSNIGDTESNAGGSKSNDGANNGASGIESNA) are compositionally biased toward polar residues. Gly residues predominate over residues 314-323 (FGAGGTGGIG). Low complexity predominate over residues 343–358 (DGASGIGSNDGSTGTN). 2 stretches are compositionally biased toward polar residues: residues 366–375 (DSNIEGTENN) and 388–416 (IGNS…TGGK). The span at 417–429 (ESNTGSESNTNSS) shows a compositional bias: low complexity. 2 Jacalin-type lectin domains span residues 430–572 (PQKL…YFVP) and 584–727 (PNKV…YFIP).

Belongs to the jacalin lectin family.

The chain is Jacalin-related lectin 5 (JAL5) from Arabidopsis thaliana (Mouse-ear cress).